The chain runs to 312 residues: MALRTSLITTTAPDKTSLPISICIIKFQVMNLLSITISPVGMVLNIIVLWFLGFQICRNAFSAYILNLAVADFLFLCSHSIFSFLIVCKLHYFLFYIRQLLDTVTMFAYVFGLSITTIISIECCLSIMWPIWYHCQRPRHTSAVICVLLWALSLLFPALQMEKCSVLFNTFEYSWCGIINIISGAWLVVLFVVLCGFSLILLLRISCGSQQIPVTRLNVTIALRVLLLLIFGIPFGIFWIVDKWNEENFFVRACGFSHHILYVYCINICVNATIYFLVGSIRHGKFQKMTLKLILQRAIQGTPEEEGGERGP.

Over 1–31 (MALRTSLITTTAPDKTSLPISICIIKFQVMN) the chain is Extracellular. Residues 32–52 (LLSITISPVGMVLNIIVLWFL) traverse the membrane as a helical segment. The Cytoplasmic segment spans residues 53–67 (GFQICRNAFSAYILN). A helical transmembrane segment spans residues 68–88 (LAVADFLFLCSHSIFSFLIVC). The Extracellular portion of the chain corresponds to 89–106 (KLHYFLFYIRQLLDTVTM). A helical membrane pass occupies residues 107 to 127 (FAYVFGLSITTIISIECCLSI). Residues 128–140 (MWPIWYHCQRPRH) lie on the Cytoplasmic side of the membrane. A helical transmembrane segment spans residues 141–161 (TSAVICVLLWALSLLFPALQM). Residues 162 to 180 (EKCSVLFNTFEYSWCGIIN) are Extracellular-facing. Residues 181 to 201 (IISGAWLVVLFVVLCGFSLIL) form a helical membrane-spanning segment. The Cytoplasmic portion of the chain corresponds to 202–220 (LLRISCGSQQIPVTRLNVT). Residues 221–241 (IALRVLLLLIFGIPFGIFWIV) traverse the membrane as a helical segment. Residues 242–259 (DKWNEENFFVRACGFSHH) lie on the Extracellular side of the membrane. A helical transmembrane segment spans residues 260-280 (ILYVYCINICVNATIYFLVGS). The Cytoplasmic portion of the chain corresponds to 281–312 (IRHGKFQKMTLKLILQRAIQGTPEEEGGERGP).

The protein belongs to the G-protein coupled receptor 1 family. Mas subfamily.

The protein localises to the membrane. Functionally, orphan receptor. Probably involved in the function of nociceptive neurons. May regulate nociceptor function and/or development, including the sensation or modulation of pain. The protein is Mas-related G-protein coupled receptor member B3 (Mrgprb3) of Mus musculus (Mouse).